Here is a 252-residue protein sequence, read N- to C-terminus: 2-succinyl-6-hydroxy-2,4-cyclohexadiene-1-carboxylate synthase (252 aa).

The protein belongs to the AB hydrolase superfamily. MenH family. As to quaternary structure, monomer.

It catalyses the reaction 5-enolpyruvoyl-6-hydroxy-2-succinyl-cyclohex-3-ene-1-carboxylate = (1R,6R)-6-hydroxy-2-succinyl-cyclohexa-2,4-diene-1-carboxylate + pyruvate. It participates in quinol/quinone metabolism; 1,4-dihydroxy-2-naphthoate biosynthesis; 1,4-dihydroxy-2-naphthoate from chorismate: step 3/7. It functions in the pathway quinol/quinone metabolism; menaquinone biosynthesis. Catalyzes a proton abstraction reaction that results in 2,5-elimination of pyruvate from 2-succinyl-5-enolpyruvyl-6-hydroxy-3-cyclohexene-1-carboxylate (SEPHCHC) and the formation of 2-succinyl-6-hydroxy-2,4-cyclohexadiene-1-carboxylate (SHCHC). This chain is 2-succinyl-6-hydroxy-2,4-cyclohexadiene-1-carboxylate synthase, found in Escherichia coli O81 (strain ED1a).